The primary structure comprises 305 residues: Glycine--tRNA ligase alpha subunit (305 aa).

The protein belongs to the class-II aminoacyl-tRNA synthetase family. In terms of assembly, tetramer of two alpha and two beta subunits.

The protein localises to the cytoplasm. The catalysed reaction is tRNA(Gly) + glycine + ATP = glycyl-tRNA(Gly) + AMP + diphosphate. This chain is Glycine--tRNA ligase alpha subunit, found in Streptococcus pneumoniae serotype 4 (strain ATCC BAA-334 / TIGR4).